The sequence spans 260 residues: Indole-3-glycerol phosphate synthase (260 aa).

It belongs to the TrpC family.

The catalysed reaction is 1-(2-carboxyphenylamino)-1-deoxy-D-ribulose 5-phosphate + H(+) = (1S,2R)-1-C-(indol-3-yl)glycerol 3-phosphate + CO2 + H2O. It participates in amino-acid biosynthesis; L-tryptophan biosynthesis; L-tryptophan from chorismate: step 4/5. This is Indole-3-glycerol phosphate synthase from Staphylococcus aureus (strain MRSA252).